We begin with the raw amino-acid sequence, 385 residues long: 1-deoxy-D-xylulose 5-phosphate reductoisomerase (385 aa).

7 residues coordinate NADPH: Thr-10, Gly-11, Ser-12, Ile-13, Gly-36, Asn-38, and Asn-122. Residue Lys-123 coordinates 1-deoxy-D-xylulose 5-phosphate. Residue Glu-124 participates in NADPH binding. A Mn(2+)-binding site is contributed by Asp-148. Residues Ser-149, Glu-150, Ser-174, and His-197 each coordinate 1-deoxy-D-xylulose 5-phosphate. Mn(2+) is bound at residue Glu-150. Gly-203 contacts NADPH. Residues Ser-210, Asn-215, Lys-216, and Glu-219 each coordinate 1-deoxy-D-xylulose 5-phosphate. Residue Glu-219 coordinates Mn(2+).

Belongs to the DXR family. It depends on Mg(2+) as a cofactor. The cofactor is Mn(2+).

The catalysed reaction is 2-C-methyl-D-erythritol 4-phosphate + NADP(+) = 1-deoxy-D-xylulose 5-phosphate + NADPH + H(+). It participates in isoprenoid biosynthesis; isopentenyl diphosphate biosynthesis via DXP pathway; isopentenyl diphosphate from 1-deoxy-D-xylulose 5-phosphate: step 1/6. Functionally, catalyzes the NADPH-dependent rearrangement and reduction of 1-deoxy-D-xylulose-5-phosphate (DXP) to 2-C-methyl-D-erythritol 4-phosphate (MEP). The protein is 1-deoxy-D-xylulose 5-phosphate reductoisomerase of Citrifermentans bemidjiense (strain ATCC BAA-1014 / DSM 16622 / JCM 12645 / Bem) (Geobacter bemidjiensis).